The chain runs to 388 residues: GTPase Obg (388 aa).

The 159-residue stretch at 1 to 159 (MKFVDEAVIR…RSLKLELLLL (159 aa)) folds into the Obg domain. The region spanning 160-333 (ADVGLLGMPN…LAAKLWDFIQ (174 aa)) is the OBG-type G domain. Residues 166-173 (GMPNAGKS), 191-195 (FTTLV), 213-216 (DIPG), 283-286 (NKAD), and 314-316 (SAY) each bind GTP. Mg(2+)-binding residues include Ser-173 and Thr-193.

It belongs to the TRAFAC class OBG-HflX-like GTPase superfamily. OBG GTPase family. In terms of assembly, monomer. Mg(2+) serves as cofactor.

Its subcellular location is the cytoplasm. In terms of biological role, an essential GTPase which binds GTP, GDP and possibly (p)ppGpp with moderate affinity, with high nucleotide exchange rates and a fairly low GTP hydrolysis rate. Plays a role in control of the cell cycle, stress response, ribosome biogenesis and in those bacteria that undergo differentiation, in morphogenesis control. The polypeptide is GTPase Obg (Shewanella oneidensis (strain ATCC 700550 / JCM 31522 / CIP 106686 / LMG 19005 / NCIMB 14063 / MR-1)).